The sequence spans 743 residues: Threonine synthase-like 1 (743 aa).

Lysine 281 carries the post-translational modification N6-acetyllysine. The residue at position 351 (lysine 351) is an N6-(pyridoxal phosphate)lysine.

This sequence belongs to the threonine synthase family. It depends on pyridoxal 5'-phosphate as a cofactor.

The protein is Threonine synthase-like 1 (THNSL1) of Homo sapiens (Human).